We begin with the raw amino-acid sequence, 306 residues long: Palmitoyl-protein thioesterase 1 (306 aa).

The signal sequence occupies residues Met1–Leu27. 3 disulfide bridges follow: Cys45/Cys46, Cys96/Cys128, and Cys152/Cys160. Ser115 is an active-site residue. Asn197, Asn212, and Asn232 each carry an N-linked (GlcNAc...) asparagine glycan. Residues Asp233 and His289 contribute to the active site.

Belongs to the palmitoyl-protein thioesterase family. In terms of assembly, interacts with CLN5, ATP5F1A and ATP5F1B. In terms of processing, glycosylated.

It is found in the lysosome. The protein localises to the secreted. The protein resides in the golgi apparatus. Its subcellular location is the endoplasmic reticulum. The catalysed reaction is S-hexadecanoyl-L-cysteinyl-[protein] + H2O = L-cysteinyl-[protein] + hexadecanoate + H(+). It carries out the reaction hexadecanoyl-CoA + H2O = hexadecanoate + CoA + H(+). It catalyses the reaction S-hexadecanoyl-N-acetylcysteamine + H2O = N-acetylcysteamine + hexadecanoate + H(+). The enzyme catalyses S-hexadecanoyl-N-acetylcysteine methyl ester + H2O = N-acetylcysteine methyl ester + hexadecanoate + H(+). With respect to regulation, palmitoylation reduces PPT1 enzymatic activity. Functionally, has thioesterase activity against fatty acid thioesters with 14 -18 carbons, including palmitoyl-CoA, S-palmitoyl-N-acetylcysteamine, and palmitoylated proteins. In contrast to PPT2, PPT1 can hydrolyze palmitoylated proteins and palmitoylcysteine. This chain is Palmitoyl-protein thioesterase 1 (PPT1), found in Macaca fascicularis (Crab-eating macaque).